The chain runs to 107 residues: Iron-binding protein IscA (107 aa).

Positions 35, 99, and 101 each coordinate Fe cation.

The protein belongs to the HesB/IscA family. As to quaternary structure, homodimer; may form tetramers and higher multimers. Fe cation serves as cofactor.

Functionally, is able to transfer iron-sulfur clusters to apo-ferredoxin. Multiple cycles of [2Fe2S] cluster formation and transfer are observed, suggesting that IscA acts catalytically. Recruits intracellular free iron so as to provide iron for the assembly of transient iron-sulfur cluster in IscU in the presence of IscS, L-cysteine and the thioredoxin reductase system TrxA/TrxB. The polypeptide is Iron-binding protein IscA (Cronobacter sakazakii (strain ATCC BAA-894) (Enterobacter sakazakii)).